We begin with the raw amino-acid sequence, 403 residues long: NADH-quinone oxidoreductase subunit D (403 aa).

The protein belongs to the complex I 49 kDa subunit family. NDH-1 is composed of 14 different subunits. Subunits NuoB, C, D, E, F, and G constitute the peripheral sector of the complex.

The protein localises to the cell inner membrane. It catalyses the reaction a quinone + NADH + 5 H(+)(in) = a quinol + NAD(+) + 4 H(+)(out). Its function is as follows. NDH-1 shuttles electrons from NADH, via FMN and iron-sulfur (Fe-S) centers, to quinones in the respiratory chain. The immediate electron acceptor for the enzyme in this species is believed to be ubiquinone. Couples the redox reaction to proton translocation (for every two electrons transferred, four hydrogen ions are translocated across the cytoplasmic membrane), and thus conserves the redox energy in a proton gradient. The protein is NADH-quinone oxidoreductase subunit D of Erythrobacter litoralis (strain HTCC2594).